A 204-amino-acid polypeptide reads, in one-letter code: Photosynthetic NDH subunit of subcomplex B 3, chloroplastic (204 aa).

Disordered regions lie at residues 1 to 24 and 45 to 68; these read MGSVQLSGSGLVASLPPNHSFSHK and KTVRAISTAPASQPPAADEPDEPP. A chloroplast-targeting transit peptide spans 1–48; the sequence is MGSVQLSGSGLVASLPPNHSFSHKTKLNKPNSYFFRSKHNAARTKTVR. The 2Fe-2S ferredoxin-type domain occupies 76-180; it reads HSVLLPDGTP…STGLVVIQQL (105 aa). The [2Fe-2S] cluster site is built by Cys-120, Cys-126, Cys-129, and Cys-162.

Part of the chloroplast NDH complex, composed of a mixture of chloroplast and nucleus encoded subunits. Component of the NDH subcomplex B, at least composed of PnsB1, PnsB2, PnsB3, PnsB4 and PnsB5.

It localises to the plastid. The protein localises to the chloroplast thylakoid membrane. In terms of biological role, NDH shuttles electrons from NAD(P)H:plastoquinone, via FMN and iron-sulfur (Fe-S) centers, to quinones in the photosynthetic chain and possibly in a chloroplast respiratory chain. The immediate electron acceptor for the enzyme in this species is believed to be plastoquinone. Couples the redox reaction to proton translocation, and thus conserves the redox energy in a proton gradient. This is Photosynthetic NDH subunit of subcomplex B 3, chloroplastic from Arabidopsis thaliana (Mouse-ear cress).